Consider the following 427-residue polypeptide: Adenylosuccinate synthetase (427 aa).

Residues 12-18 and 40-42 contribute to the GTP site; these read GDEGKGK and GHT. Aspartate 13 serves as the catalytic Proton acceptor. Mg(2+)-binding residues include aspartate 13 and glycine 40. Residues 13–16, 38–41, threonine 128, arginine 142, glutamine 223, threonine 238, and arginine 302 contribute to the IMP site; these read DEGK and NAGH. Residue histidine 41 is the Proton donor of the active site. Residue 298–304 coordinates substrate; it reads TTTGRPR. GTP-binding positions include arginine 304, 330–332, and 412–414; these read KLD and GVG.

The protein belongs to the adenylosuccinate synthetase family. In terms of assembly, homodimer. Requires Mg(2+) as cofactor.

The protein localises to the cytoplasm. It catalyses the reaction IMP + L-aspartate + GTP = N(6)-(1,2-dicarboxyethyl)-AMP + GDP + phosphate + 2 H(+). The protein operates within purine metabolism; AMP biosynthesis via de novo pathway; AMP from IMP: step 1/2. Its function is as follows. Plays an important role in the de novo pathway of purine nucleotide biosynthesis. Catalyzes the first committed step in the biosynthesis of AMP from IMP. The chain is Adenylosuccinate synthetase from Pelotomaculum thermopropionicum (strain DSM 13744 / JCM 10971 / SI).